We begin with the raw amino-acid sequence, 774 residues long: MSKENIVTRENTAVSENAVSEPTVNNDVGASATNSVTHPAFTLNVRPDNIGIITIDVVGDKVNTLKAEFADQIATILQQAHALPKLQGLVIVSGKPDSFIAGADITMIAACRTAHDARVLAQKGQSILAQIAAFPVPVVAAIHGACLGGGLELALACHSRICSLDDKTVLGLPEVQLGLLPGSGGTQRLPRLVGVSKALDMILTGKQIRPRQALKMGLVDDVVPRDILLDVAIQRAKAGWLNRRALPWQERLLSGPLGKALLFRIVRKKTLAKTRGHYPAAERIIDVVRKGLDQGGPSGYEAEARAFGELAMSPQSAALRSLFFATTSLKKETGSAATARAIHRVGVLGGGLMGGGIANVTATRAGLPVRIKDINPQGINQALKYTWDALGKRVRSKRMRPTEQQRQMMLISGSTDYRGFERVDIVVEAVFEDLSLKQQMVADIERFGAAHTIFASNTSSLPISQIAALAQRPEQVIGLHYFSPVDKMPLVEVIPHEKTSEETIATTVALARKQGKTAIVVADRAGFYVNRILAPYINEAARCLLDGEPIESVDNALVDFGFPVGPMMLLDEVGIDVATKIMPILVEQLGPRFAAPPSFDVILKDGRKGRKNGRGFYLYSNPTKNSSPTKNGNSPAKRNSFKWRKNKVKPVDASIYTLLGVTPKAHLGAGVITQRCTMLMLNEAVRCLDESIIRNPRDGDIGAVFGIGFPPFLGGPFRYLDSLGADKVVQALRLLVQQYGERFEPCQRLVTMAEQQQQFYPVDANIDEVTDVAS.

Disordered regions lie at residues 1–31 (MSKE…VGAS) and 617–641 (YLYS…RNSF). Residues 1-224 (MSKENIVTRE…KMGLVDDVVP (224 aa)) are enoyl-CoA hydratase. Composition is skewed to polar residues over residues 8–31 (TREN…VGAS) and 620–637 (SNPT…SPAK). Positions 340 to 774 (RAIHRVGVLG…NIDEVTDVAS (435 aa)) are 3-hydroxyacyl-CoA dehydrogenase.

This sequence in the N-terminal section; belongs to the enoyl-CoA hydratase/isomerase family. The protein in the central section; belongs to the 3-hydroxyacyl-CoA dehydrogenase family. As to quaternary structure, heterotetramer of two alpha chains (FadJ) and two beta chains (FadI).

The protein localises to the cytoplasm. The catalysed reaction is a (3S)-3-hydroxyacyl-CoA = a (2E)-enoyl-CoA + H2O. It carries out the reaction a 4-saturated-(3S)-3-hydroxyacyl-CoA = a (3E)-enoyl-CoA + H2O. It catalyses the reaction a (3S)-3-hydroxyacyl-CoA + NAD(+) = a 3-oxoacyl-CoA + NADH + H(+). The enzyme catalyses (3S)-3-hydroxybutanoyl-CoA = (3R)-3-hydroxybutanoyl-CoA. It functions in the pathway lipid metabolism; fatty acid beta-oxidation. Catalyzes the formation of a hydroxyacyl-CoA by addition of water on enoyl-CoA. Also exhibits 3-hydroxyacyl-CoA epimerase and 3-hydroxyacyl-CoA dehydrogenase activities. The chain is Fatty acid oxidation complex subunit alpha from Yersinia pestis (strain Pestoides F).